A 198-amino-acid polypeptide reads, in one-letter code: Host transcription reprogramming factor 1 (198 aa).

Residues 1-19 form the signal peptide; that stretch reads MQLSNFLSIWALVAMGATA. Disordered regions lie at residues 21–59 and 71–198; these read PMPS…SYHS and ERLA…PVQL. Residues 58–81 form a C2H2-type zinc finger; that stretch reads HSCETCAAPFRTEERLAAHRQADH. Basic and acidic residues-rich tracts occupy residues 71-80, 104-128, and 167-177; these read ERLAAHRQAD, TSER…RSQE, and KLDKPTRKEQY.

The protein localises to the secreted. It is found in the host nucleus. Secreted effector that translocates into the nuclei of host cells to reprogram the expression of immunity-associated genes by binding to effector binding elements (EBEs) in rice. Binds the 5'-CAATCTTC-3' EBE of promoters from targeted rice genes and probably recruits a yet to be determined host repressor. Causes ambivalent immunity with increased susceptibility to the hemibiotrophic pathogens Magnaporthe oryzae and Xanthomonas oryzae pv. oryzae, but enhances resistance to Cochliobolus miyabeanus, a necrotrophic pathogen. This Pyricularia oryzae (strain 70-15 / ATCC MYA-4617 / FGSC 8958) (Rice blast fungus) protein is Host transcription reprogramming factor 1.